Reading from the N-terminus, the 1226-residue chain is MYGQVERKRVNFGKITNLDYLPNLIQIQKRSFDWFLQADVKDETKRRHQGLEAVFRETFPIESPNNDMIMEYSHYILGEPKRSPQECKDTDATFAMPLKAVIRLIIKETGEIREQTVYMGDLPVMTEQGTFIINGAERVVVSQLHRSPGIFFSYDMERDVFSARVIPYRGSWLEFEMDNKGILIAKIDRKKKFPATLLVKSLGHGTNEEVLRLFYSSKKEKIAGATSKDLKKILGRRTINDIINMETGEVMLEAGSKINEDNISILKEMKVKEVELIEFPKGKDNPILINALEKDGVNDYEDAILKFHSLMRQGEPSTIENATTELTRLFFSPKTFDLGEVGRYKINSKFEFNNPKEFSGEKARVLRPADIIETVRYILNLFSETENYYPDDIDHLGNRRIRSVGELISNQLKTGFSRVERVIKERMTVQEIETQTPQLLISIKPITAVINEFFGSSQLSQFMDQTNPLAELTHKRRLNALGPGGLSRDRAGMEVRDVHYSHYGRMCPIETPEGPNIGLILSMSSYARVNDYGFLETPYRTVKNGKVTGQIEHLTADKEEYHYIAQASGVIDEKGELKNKLISTRHRGDFPFRNPSEIQYMDLAPLQVVSVSTALIPFLEHDDANRALMGSNMQRQAVPLLREEAPFVGTGMETRAAYDSRICIVNKHDGVVTSVDAENIVVERKGGKESDTYQLTKFKKTNQGTCFNQKPIVGVVHSEINGKVSKVSKEKIEVTGENGELKEYVLQIGSKQYSPIVSAGEEVKRGSTLAGQVVVGEKLDEMGNILVKGTVLADGPAVDNGVLALGRNVLAAFMPWEGYNFEDAILISERIVRDDVFSSIHIEEFEIQARETKLGPEQITRDIPNLSDKAFRDLDETGVIRIGAEVKPGDILVGMVTPKGETDLTPEYKLLHSIFGEKAKDVRDSSLRMPNGFEGTVIDIKRFSRENQDELPAGVEEMVKVFVARKRKLLVGDKMAGRHGNKGVVARVMAEEDMPYMEDGTPLDIVLNPLGVPSRMNLGQIFETQLGFAASKLGISFETPVFDGAEESDVDNFCKEANLPLNSKFKLYDGRTGLPFMNEVFCGYIYILKLAHLVEDKIHARSTGPYSLVTQQPLGGKAQFGGQRLGEMEVWALEAYGASHTLQELLTIKSDDMLGRARIYEAIVKGIHSIKPGIPESFNVLVQELRGLALDIIITDSEGNTVDISDYEDEYSKSKKKIKFETIENA.

This sequence belongs to the RNA polymerase beta chain family. In terms of assembly, the RNAP catalytic core consists of 2 alpha, 1 beta, 1 beta' and 1 omega subunit. When a sigma factor is associated with the core the holoenzyme is formed, which can initiate transcription.

The enzyme catalyses RNA(n) + a ribonucleoside 5'-triphosphate = RNA(n+1) + diphosphate. In terms of biological role, DNA-dependent RNA polymerase catalyzes the transcription of DNA into RNA using the four ribonucleoside triphosphates as substrates. The protein is DNA-directed RNA polymerase subunit beta of Leptospira interrogans serogroup Icterohaemorrhagiae serovar Lai (strain 56601).